The primary structure comprises 141 residues: VLSGDDKSNLKTAWGKLGGHAGEYGAEALERMFVAYPTTKTYFPHFDVSHGSAQVKGHGKKVADALTTAVGHLDDLPGALSALSDLHAHKLRVDPVNFKLLSHCLLVTLANHLPADFTPAVHASLDKFLASVSTVLTSKYR.

The 141-residue stretch at 1–141 (VLSGDDKSNL…VSTVLTSKYR (141 aa)) folds into the Globin domain. S3 is modified (phosphoserine). N6-succinyllysine occurs at positions 7 and 11. N6-acetyllysine; alternate is present on K16. The residue at position 16 (K16) is an N6-succinyllysine; alternate. The residue at position 24 (Y24) is a Phosphotyrosine. N6-succinyllysine is present on K40. Phosphoserine is present on S49. H58 provides a ligand contact to O2. H87 is a binding site for heme b. S102 bears the Phosphoserine mark. Phosphothreonine is present on T108. 2 positions are modified to phosphoserine: S124 and S131. Phosphothreonine occurs at positions 134 and 137. S138 carries the phosphoserine modification.

This sequence belongs to the globin family. As to quaternary structure, heterotetramer of two alpha chains and two beta chains. As to expression, red blood cells.

Involved in oxygen transport from the lung to the various peripheral tissues. This chain is Hemoglobin subunit alpha, found in Microtus pennsylvanicus (Meadow vole).